The following is an 863-amino-acid chain: Oleate activated transcription factor 3 (863 aa).

Residues 19 to 47 constitute a DNA-binding region (zn(2)-C6 fungal-type); sequence CTNCKKRKSKCDRTKPCGTCVRLGDVDSC. Residues 52-63 are compositionally biased toward polar residues; the sequence is DSSGQPESSPSL. The segment at 52-99 is disordered; the sequence is DSSGQPESSPSLNDADPLRKQSTPAERISPGFIKKRRSSQTRQDEDHW.

The protein belongs to the OAF3 family.

Its subcellular location is the cytoplasm. The protein resides in the nucleus. It localises to the mitochondrion. In terms of biological role, transcriptional inhibitor with a significantly increased number of target genes in response to oleate. The chain is Oleate activated transcription factor 3 (OAF3) from Saccharomyces cerevisiae (strain YJM789) (Baker's yeast).